The chain runs to 285 residues: Involucrin (285 aa).

Disordered stretches follow at residues 1-93, 120-256, and 266-285; these read MSQQ…QEQK, LEQQ…AQVQ, and LPLI…PEHQ. Residues 27–39 are compositionally biased toward polar residues; sequence IDTQQEQVKQPTS. Composition is skewed to low complexity over residues 72–87, 120–129, and 137–147; these read EQQC…QKQQ, LEQQQEQQES, and EQCLEQQQEQQ. Basic and acidic residues-rich tracts occupy residues 149 to 165, 175 to 185, and 200 to 233; these read SQEK…KEEL, EQCEKHQEAKN, and QQKE…KEEQ. Residues 235-248 are compositionally biased toward low complexity; it reads LEQQGQQEGQLEQP. Positions 272 to 285 are enriched in basic and acidic residues; that stretch reads QHQKQEVHDPPEHQ.

The protein belongs to the involucrin family. As to quaternary structure, directly or indirectly cross-linked to cornifelin (CNFN). Post-translationally, substrate of transglutaminase. Specific glutamines or lysines are cross-linked to keratins, desmoplakin and to inter involucrin molecules. In terms of tissue distribution, keratinocytes of epidermis and other stratified squamous epithelia.

Its subcellular location is the cytoplasm. Functionally, part of the insoluble cornified cell envelope (CE) of stratified squamous epithelia. The protein is Involucrin (IVL) of Canis lupus familiaris (Dog).